The primary structure comprises 171 residues: CASP-like protein 5A2 (171 aa).

Residues 1 to 39 (MDGSAHLRDPPGPAVLRWRLEDMHIIPGTSGSLALRICQ) lie on the Cytoplasmic side of the membrane. Residues 40-60 (FSAAIVSFSVMISAANFSSVT) traverse the membrane as a helical segment. A61 is a topological domain (extracellular). The helical transmembrane segment at 62–82 (FCFLVAAMVLQCMWSLSVATI) threads the bilayer. The Cytoplasmic segment spans residues 83–106 (EGYAMLVGRSLRDSPLLSLFAVGD). Residues 107–127 (WVTAVITFAGACASAGIAVLV) traverse the membrane as a helical segment. Residues 128–148 (GRDIHRGCDVNFCGRYAAAAG) are Extracellular-facing. A helical membrane pass occupies residues 149–169 (MAFLSWLLISTSFLFTFWLLA). The Cytoplasmic segment spans residues 170-171 (TR).

The protein belongs to the Casparian strip membrane proteins (CASP) family. As to quaternary structure, homodimer and heterodimers.

The protein localises to the cell membrane. The sequence is that of CASP-like protein 5A2 from Pteridium aquilinum subsp. aquilinum (Bracken fern).